The primary structure comprises 163 residues: Putative pre-16S rRNA nuclease (163 aa).

The protein belongs to the YqgF nuclease family.

The protein resides in the cytoplasm. Could be a nuclease involved in processing of the 5'-end of pre-16S rRNA. This chain is Putative pre-16S rRNA nuclease, found in Nitrobacter winogradskyi (strain ATCC 25391 / DSM 10237 / CIP 104748 / NCIMB 11846 / Nb-255).